The chain runs to 213 residues: Thiamine-phosphate synthase (213 aa).

4-amino-2-methyl-5-(diphosphooxymethyl)pyrimidine is bound by residues Q42–K46 and D77. Mg(2+) is bound by residues D78 and D97. Residue S116 participates in 4-amino-2-methyl-5-(diphosphooxymethyl)pyrimidine binding. 2-[(2R,5Z)-2-carboxy-4-methylthiazol-5(2H)-ylidene]ethyl phosphate is bound at residue T142–S144. Residue K145 participates in 4-amino-2-methyl-5-(diphosphooxymethyl)pyrimidine binding. Residues G173 and I193–S194 contribute to the 2-[(2R,5Z)-2-carboxy-4-methylthiazol-5(2H)-ylidene]ethyl phosphate site.

The protein belongs to the thiamine-phosphate synthase family. The cofactor is Mg(2+).

The enzyme catalyses 2-[(2R,5Z)-2-carboxy-4-methylthiazol-5(2H)-ylidene]ethyl phosphate + 4-amino-2-methyl-5-(diphosphooxymethyl)pyrimidine + 2 H(+) = thiamine phosphate + CO2 + diphosphate. The catalysed reaction is 2-(2-carboxy-4-methylthiazol-5-yl)ethyl phosphate + 4-amino-2-methyl-5-(diphosphooxymethyl)pyrimidine + 2 H(+) = thiamine phosphate + CO2 + diphosphate. It catalyses the reaction 4-methyl-5-(2-phosphooxyethyl)-thiazole + 4-amino-2-methyl-5-(diphosphooxymethyl)pyrimidine + H(+) = thiamine phosphate + diphosphate. Its pathway is cofactor biosynthesis; thiamine diphosphate biosynthesis; thiamine phosphate from 4-amino-2-methyl-5-diphosphomethylpyrimidine and 4-methyl-5-(2-phosphoethyl)-thiazole: step 1/1. Its function is as follows. Condenses 4-methyl-5-(beta-hydroxyethyl)thiazole monophosphate (THZ-P) and 2-methyl-4-amino-5-hydroxymethyl pyrimidine pyrophosphate (HMP-PP) to form thiamine monophosphate (TMP). The chain is Thiamine-phosphate synthase from Limosilactobacillus fermentum (strain NBRC 3956 / LMG 18251) (Lactobacillus fermentum).